Reading from the N-terminus, the 875-residue chain is Protein SEY1 (875 aa).

Over 1–749 the chain is Cytoplasmic; the sequence is MVANGHFASN…KRSAIGGITQ (749 aa). The 259-residue stretch at 49–307 folds into the GB1/RHD3-type G domain; sequence GFNYHLISVF…IPADGFAVYA (259 aa). 59–66 contacts GTP; the sequence is GSQSTGKS. Residues 482 to 506 adopt a coiled-coil conformation; the sequence is SNYQQELSLYQKDLERISGQLRRDE. Residues 676-704 form a disordered region; sequence LDKWIGHTPSSATPADEEDLTPIGGVDED. Residues 690-704 are compositionally biased toward acidic residues; that stretch reads ADEEDLTPIGGVDED. A helical membrane pass occupies residues 750-770; that stretch reads VPLYFYGLLLALGWNEIMAVL. Topologically, residues 771–773 are lumenal; it reads RNP. A helical membrane pass occupies residues 774–794; that stretch reads AYFFLLFVCAIGAYVTYQLNL. Topologically, residues 795-875 are cytoplasmic; it reads WGPIIKMTEA…ADDDDVDDDF (81 aa). The disordered stretch occupies residues 831-875; it reads MAMSGARNATEEHEMSNLNRKSGERGGQKYRGEDVADDDDVDDDF. Over residues 839-864 the composition is skewed to basic and acidic residues; it reads ATEEHEMSNLNRKSGERGGQKYRGED. Over residues 865–875 the composition is skewed to acidic residues; sequence VADDDDVDDDF.

This sequence belongs to the TRAFAC class dynamin-like GTPase superfamily. GB1/RHD3 GTPase family. RHD3 subfamily.

It is found in the endoplasmic reticulum membrane. Functionally, cooperates with the reticulon proteins and tubule-shaping DP1 family proteins to generate and maintain the structure of the tubular endoplasmic reticulum network. Has GTPase activity, which is required for its function in ER organization. The sequence is that of Protein SEY1 from Ajellomyces dermatitidis (strain ER-3 / ATCC MYA-2586) (Blastomyces dermatitidis).